A 388-amino-acid chain; its full sequence is MEGTPAANWSIELDLGSGVPPGAEGNLTAGPPRRNEALARVEVAVLCLILFLALSGNACVLLALRTTRHKHSRLFFFMKHLSIADLVVAVFQVLPQLLWDITFRFYGPDLLCRLVKYLQVVGMFASTYLLLLMSLDRCLAICQPLRSLRRRTDRLAVLATWLGCLVASVPQVHIFSLREVADGVFDCWAVFIQPWGPKAYVTWITLAVYIVPVIVLAACYGLISFKIWQNLRLKTAAAAAAAEGSDAAGGAGRAALARVSSVKLISKAKIRTVKMTFIIVLAFIVCWTPFFFVQMWSVWDVNAPKEASAFIIAMLLASLNSCCNPWIYMLFTGHLFHELVQRFLCCSARYLKGSRPGETSISKKSNSSTFVLSRRSSSQRSCSQPSSA.

At methionine 1 to leucine 38 the chain is on the extracellular side. N-linked (GlcNAc...) asparagine glycans are attached at residues asparagine 8 and asparagine 26. Residues alanine 39 to alanine 63 traverse the membrane as a helical segment. The Cytoplasmic portion of the chain corresponds to leucine 64 to leucine 74. The helical transmembrane segment at phenylalanine 75–leucine 97 threads the bilayer. The Extracellular portion of the chain corresponds to leucine 98–arginine 113. Cysteine 112 and cysteine 187 are joined by a disulfide. The chain crosses the membrane as a helical span at residues leucine 114–leucine 135. Topologically, residues aspartate 136–arginine 154 are cytoplasmic. Residues leucine 155–phenylalanine 175 form a helical membrane-spanning segment. The Extracellular segment spans residues serine 176–threonine 202. The chain crosses the membrane as a helical span at residues tryptophan 203–phenylalanine 225. Over lysine 226–lysine 274 the chain is Cytoplasmic. Residues methionine 275–valine 293 traverse the membrane as a helical segment. Topologically, residues glutamine 294 to serine 308 are extracellular. A helical membrane pass occupies residues alanine 309–phenylalanine 331. Residues threonine 332–alanine 388 are Cytoplasmic-facing. The interval serine 354–alanine 388 is disordered. Serine 365 and serine 367 each carry phosphoserine. Low complexity predominate over residues serine 365 to alanine 388.

The protein belongs to the G-protein coupled receptor 1 family. Vasopressin/oxytocin receptor subfamily.

It is found in the cell membrane. Functionally, receptor for oxytocin. The activity of this receptor is mediated by G proteins which activate a phosphatidylinositol-calcium second messenger system. The chain is Oxytocin receptor (Oxtr) from Mus musculus (Mouse).